Reading from the N-terminus, the 464-residue chain is Siroheme synthase (464 aa).

The tract at residues 1-203 (MEYLPLFHNL…GQGAEAERLL (203 aa)) is precorrin-2 dehydrogenase /sirohydrochlorin ferrochelatase. NAD(+) is bound by residues 22–23 (EI) and 43–44 (PE). At Ser128 the chain carries Phosphoserine. The interval 216–464 (GEVYLVGAGP…AWFEGAQSEV (249 aa)) is uroporphyrinogen-III C-methyltransferase. Pro225 is a binding site for S-adenosyl-L-methionine. Asp248 acts as the Proton acceptor in catalysis. The Proton donor role is filled by Lys270. Residues 301 to 303 (GGD), Ile306, 331 to 332 (TA), Met383, and Gly412 each bind S-adenosyl-L-methionine.

The protein in the N-terminal section; belongs to the precorrin-2 dehydrogenase / sirohydrochlorin ferrochelatase family. It in the C-terminal section; belongs to the precorrin methyltransferase family.

It catalyses the reaction uroporphyrinogen III + 2 S-adenosyl-L-methionine = precorrin-2 + 2 S-adenosyl-L-homocysteine + H(+). It carries out the reaction precorrin-2 + NAD(+) = sirohydrochlorin + NADH + 2 H(+). The enzyme catalyses siroheme + 2 H(+) = sirohydrochlorin + Fe(2+). The protein operates within cofactor biosynthesis; adenosylcobalamin biosynthesis; precorrin-2 from uroporphyrinogen III: step 1/1. It participates in cofactor biosynthesis; adenosylcobalamin biosynthesis; sirohydrochlorin from precorrin-2: step 1/1. It functions in the pathway porphyrin-containing compound metabolism; siroheme biosynthesis; precorrin-2 from uroporphyrinogen III: step 1/1. Its pathway is porphyrin-containing compound metabolism; siroheme biosynthesis; siroheme from sirohydrochlorin: step 1/1. The protein operates within porphyrin-containing compound metabolism; siroheme biosynthesis; sirohydrochlorin from precorrin-2: step 1/1. Functionally, multifunctional enzyme that catalyzes the SAM-dependent methylations of uroporphyrinogen III at position C-2 and C-7 to form precorrin-2 via precorrin-1. Then it catalyzes the NAD-dependent ring dehydrogenation of precorrin-2 to yield sirohydrochlorin. Finally, it catalyzes the ferrochelation of sirohydrochlorin to yield siroheme. In Pseudomonas fluorescens (strain ATCC BAA-477 / NRRL B-23932 / Pf-5), this protein is Siroheme synthase.